The sequence spans 942 residues: Leucine--tRNA ligase (942 aa).

Residues 41–51 (PYLNGVLHAGH) carry the 'HIGH' region motif. The 'KMSKS' region motif lies at 633 to 637 (KLSKS). Lys-636 contributes to the ATP binding site.

The protein belongs to the class-I aminoacyl-tRNA synthetase family.

It is found in the cytoplasm. The enzyme catalyses tRNA(Leu) + L-leucine + ATP = L-leucyl-tRNA(Leu) + AMP + diphosphate. The sequence is that of Leucine--tRNA ligase from Methanocaldococcus jannaschii (strain ATCC 43067 / DSM 2661 / JAL-1 / JCM 10045 / NBRC 100440) (Methanococcus jannaschii).